The sequence spans 149 residues: D-aminoacyl-tRNA deacylase (149 aa).

The Gly-cisPro motif, important for rejection of L-amino acids motif lies at 137-138; that stretch reads GP.

This sequence belongs to the DTD family. In terms of assembly, homodimer.

It is found in the cytoplasm. It carries out the reaction glycyl-tRNA(Ala) + H2O = tRNA(Ala) + glycine + H(+). It catalyses the reaction a D-aminoacyl-tRNA + H2O = a tRNA + a D-alpha-amino acid + H(+). Its function is as follows. An aminoacyl-tRNA editing enzyme that deacylates mischarged D-aminoacyl-tRNAs. Also deacylates mischarged glycyl-tRNA(Ala), protecting cells against glycine mischarging by AlaRS. Acts via tRNA-based rather than protein-based catalysis; rejects L-amino acids rather than detecting D-amino acids in the active site. By recycling D-aminoacyl-tRNA to D-amino acids and free tRNA molecules, this enzyme counteracts the toxicity associated with the formation of D-aminoacyl-tRNA entities in vivo and helps enforce protein L-homochirality. The sequence is that of D-aminoacyl-tRNA deacylase from Thermoanaerobacter pseudethanolicus (strain ATCC 33223 / 39E) (Clostridium thermohydrosulfuricum).